Consider the following 59-residue polypeptide: Small ribosomal subunit protein bS21 (59 aa).

Positions 34-59 are disordered; that stretch reads KHEHYEKPSVKRKKKSEAARRRKRSF. Residues 43 to 59 are compositionally biased toward basic residues; it reads VKRKKKSEAARRRKRSF.

Belongs to the bacterial ribosomal protein bS21 family.

The sequence is that of Small ribosomal subunit protein bS21 from Desulforudis audaxviator (strain MP104C).